The chain runs to 466 residues: Peptidoglycan-N-acetylglucosamine deacetylase PgdA (466 aa).

At 1–5 the chain is on the cytoplasmic side; it reads MKIRW. The chain crosses the membrane as a helical span at residues 6-26; sequence IRLSLVAILIIAVVFIGVIGF. At 27 to 466 the chain is on the extracellular side; sequence QKYQFSKSRN…FDKTDSRMVK (440 aa). The region spanning 266–440 is the NodB homology domain; the sequence is KRIALTFDDG…KLKSQGYEFV (175 aa). The active-site Proton acceptor is Asp-273. Zn(2+)-binding residues include Asp-274, His-324, and His-328. Tyr-365 provides a ligand contact to substrate. The active-site Proton donor is the His-415.

In terms of assembly, homodimer. Interacts (via transmembrane domain) with PbpA1 (via transmembrane domain); the interaction is important for the peptidoglycan N-deacetylase function of this protein. The cofactor is Zn(2+).

Its subcellular location is the cell membrane. It is found in the secreted. The protein resides in the cell wall. The catalysed reaction is peptidoglycan-N-acetyl-D-glucosamine + H2O = peptidoglycan-D-glucosamine + acetate.. Functionally, catalyzes the deacetylation of N-acetylglucosamine (GlcNAc) residues in peptidoglycan (PG). Also deacetylates N-acetylated PG. Does not deacetylate N-acetylmuramic acid. Confers host lysozyme resistance. Critical for virulence and escape from innate immune response of the host. Required for intracellular survival of bacteria in macrophages of the host. Required for successful host colonization. Controls the production of inflammatory mediators in the bone marrow derived macrophages (BMMs) of the infected mouse. Suppresses Toll-like receptor 2 (TLR2)-dependent secretion of interleukin 6 (IL-6) and interferon-beta (IFN-beta) in the macrophages of the infected mouse. May decrease accessibility of pattern recognition receptors (PRRs) such as nucleotide-binding oligomerization domain protein (NOD) 1 of the host to the bacterial cell wall components. Protects cells from autolysis induced by lysozyme or by other autolysis-inducing agents. The chain is Peptidoglycan-N-acetylglucosamine deacetylase PgdA from Listeria monocytogenes serotype 1/2a (strain 10403S).